We begin with the raw amino-acid sequence, 1051 residues long: MGPGPRCAPGDPGWMLGALALMVAASGRFAFAFNLDTRFLVVKEAVNPGSLFGYSVALHRQTERQQRYLLLAGAPRDLSVADGYTNRTGAVYLCPLTALKDDCERMDISEKSDPDHHIIEDMWLGVTVASQGPAGRVLVCAHRYTQVLWSGMEDQRRMVGKCYVRGNDLQLDPGDDWQTYHNEMCNSNTDYLQTGMCQLGTSGGFTQNTVYFGAPGAYNWKGNSYMIQRKDWDLSEYSYKGSEDQGNLYIGYTVQVGSAVLHPTYITVVAGAPRHQHMGAVFLLSQESGGDLKRKQVLEGTQVGAYFGSAIALADLNNDGWQDLLVGAPYYFERKEEVGGAVYVFMNQAGTSFPDQPSLLLHGPSRSAFGISIASIGDINQDGFQDIAVGAPFEGLGKVYIYHSSSGGLLRQPQQIVHGDKLGLPGLSTFGYSLSGKMDVDDNSYPDLLVGSLSDHIVLLRARPVINILQRTLVARPAVLDPSLCTPTSCVQVELCFAYNQSAGNPSYRRNITLAYTLEADRDRRPPRLRFARSQSAVFHGFLSMPETHCQTLELLLMDNVRDKLRPIVIAMNYSLPLRMPDRLKLGMRSLDAYPVLNQAQALENHTEVHFQKECGPDNKCDSNLQMRAAFVSEQLQPLSRLQYSRDTKKLFLSINVTNTPSRERAGEDAHEALLTLEVPPALLLSSVRPSGTCQANETILCELGNPFKRNQRMELLIAFEVIGVTLHTRDLKAQLQLSTSSHQDNLQPMTLILQVDYTLQASLSLMTHRLQSFFGGTVMGEAGMKTVEDVGSPLKYEFQVSPVGDGLAALGTLVLGLEWPYEVTNGKWLLYPTEIIIHSNESWPCQPPGNLVNPLNLILSDPGDKPHSPQRRRRQLDPGGDQGSPPVTLAAAKKAKSETVLTCASGRARCVWLECPIPDTSNVTNVTVKARVWNSTFIEDYRDFDRVRVDGWATLFLRTSIPTINMENKTTWFSVDIDSELVEELPAEIELWLVLVAVSAGLLLLGLIIILLWKCGFFKRARTRALYEAKRQKAEMKSQPSETERLTDDY.

The signal sequence occupies residues 1–32 (MGPGPRCAPGDPGWMLGALALMVAASGRFAFA). Topologically, residues 33–991 (FNLDTRFLVV…LVEELPAEIE (959 aa)) are extracellular. 7 FG-GAP repeats span residues 38 to 103 (RFLV…KDDC), 110 to 171 (EKSD…DLQL), 185 to 235 (CNSN…WDLS), 236 to 292 (EYSY…GGDL), 293 to 354 (KRKQ…TSFP), 356 to 411 (QPSL…GLLR), and 415 to 477 (QIVH…VARP). N86 carries N-linked (GlcNAc...) asparagine glycosylation. Disulfide bonds link C94/C103, C140/C162, and C185/C197. Ca(2+)-binding residues include D315, N317, D319, D323, D378, N380, D382, D386, D439, D441, N443, Y445, and D447. Intrachain disulfides connect C485–C490 and C496–C550. N500, N511, N573, and N605 each carry an N-linked (GlcNAc...) asparagine glycan. A disulfide bridge links C615 with C621. 3 N-linked (GlcNAc...) asparagine glycosylation sites follow: N656, N697, and N841. A disulfide bond links C694 and C702. Disulfide bonds link C846/C904 and C911/C916. Residues 860 to 888 (LSDPGDKPHSPQRRRRQLDPGGDQGSPPV) form a disordered region. 4 N-linked (GlcNAc...) asparagine glycosylation sites follow: N923, N926, N935, and N969. A helical transmembrane segment spans residues 992-1019 (LWLVLVAVSAGLLLLGLIIILLWKCGFF). The GFFKR motif signature appears at 1017-1021 (GFFKR). Topologically, residues 1020–1051 (KRARTRALYEAKRQKAEMKSQPSETERLTDDY) are cytoplasmic.

It belongs to the integrin alpha chain family. In terms of assembly, heterodimer of an alpha and a beta subunit. The alpha subunit is composed of a heavy and a light chain linked by a disulfide bond. Alpha-3 associates with beta-1. Interacts with HPS5. Interacts with FAP (seprase); the interaction occurs at the cell surface of invadopodia membrane in a collagen-dependent manner. Isoform 1, but not isoform 2, is phosphorylated on serine residues.

It is found in the cell membrane. The protein localises to the cell projection. Its subcellular location is the invadopodium membrane. The protein resides in the filopodium membrane. In terms of biological role, integrin alpha-3/beta-1 is a receptor for fibronectin, laminin, collagen, epiligrin, thrombospondin and CSPG4. Integrin alpha-3/beta-1 provides a docking site for FAP (seprase) at invadopodia plasma membranes in a collagen-dependent manner and hence may participate in the adhesion, formation of invadopodia and matrix degradation processes, promoting cell invasion. Alpha-3/beta-1 may mediate with LGALS3 the stimulation by CSPG4 of endothelial cells migration. The sequence is that of Integrin alpha-3 (ITGA3) from Cricetulus griseus (Chinese hamster).